A 301-amino-acid chain; its full sequence is GTPase Era (301 aa).

In terms of domain architecture, Era-type G spans 6–173 (KSGFVAIVGR…LEQTNANLEI (168 aa)). The G1 stretch occupies residues 14 to 21 (GRPNVGKS). 14-21 (GRPNVGKS) provides a ligand contact to GTP. The tract at residues 40-44 (QTTRN) is G2. The tract at residues 61–64 (DTPG) is G3. Residues 61-65 (DTPGI) and 123-126 (NKID) each bind GTP. Residues 123 to 126 (NKID) are G4. The segment at 152 to 154 (ISA) is G5. The region spanning 204–282 (TREEVPHSVA…FLEIWVKVQK (79 aa)) is the KH type-2 domain.

Belongs to the TRAFAC class TrmE-Era-EngA-EngB-Septin-like GTPase superfamily. Era GTPase family. As to quaternary structure, monomer.

The protein localises to the cytoplasm. Its subcellular location is the cell membrane. Functionally, an essential GTPase that binds both GDP and GTP, with rapid nucleotide exchange. Plays a role in 16S rRNA processing and 30S ribosomal subunit biogenesis and possibly also in cell cycle regulation and energy metabolism. This chain is GTPase Era, found in Listeria welshimeri serovar 6b (strain ATCC 35897 / DSM 20650 / CCUG 15529 / CIP 8149 / NCTC 11857 / SLCC 5334 / V8).